Reading from the N-terminus, the 282-residue chain is Probable septum site-determining protein MinC (282 aa).

Residues 103–147 (SQSRRGGKDEAPKEKAGKPEATAASGQTDAEAAGNTGKGKDSEGA) form a disordered region. Residues 104–120 (QSRRGGKDEAPKEKAGK) are compositionally biased toward basic and acidic residues.

It belongs to the MinC family. Interacts with MinD and FtsZ.

Cell division inhibitor that blocks the formation of polar Z ring septums. Rapidly oscillates between the poles of the cell to destabilize FtsZ filaments that have formed before they mature into polar Z rings. Prevents FtsZ polymerization. In Cupriavidus metallidurans (strain ATCC 43123 / DSM 2839 / NBRC 102507 / CH34) (Ralstonia metallidurans), this protein is Probable septum site-determining protein MinC.